The sequence spans 197 residues: Large ribosomal subunit protein eL15 (197 aa).

Over residues 163–172 the composition is skewed to basic residues; the sequence is GKTSAGRKGR. Residues 163–197 form a disordered region; it reads GKTSAGRKGRGMQTRGTGTEKTRPSVRSNLNRSKK. Residues 186 to 197 show a composition bias toward polar residues; the sequence is PSVRSNLNRSKK.

It belongs to the eukaryotic ribosomal protein eL15 family.

This Methanococcoides burtonii (strain DSM 6242 / NBRC 107633 / OCM 468 / ACE-M) protein is Large ribosomal subunit protein eL15.